A 2636-amino-acid chain; its full sequence is Ankyrin repeat and KH domain-containing protein CBG24701 (2636 aa).

ANK repeat units follow at residues 252 to 281, 286 to 317, 361 to 390, 435 to 464, 468 to 500, 505 to 534, 536 to 564, 566 to 595, 598 to 627, 632 to 661, and 665 to 695; these read SRIT…DPNA, NCNT…KVDV, NDNS…KNQQ, NLPS…RIDE, HKNT…DVNA, SGDT…DLTT, KITP…TIPQ, QLSR…DLNF, DERT…SVNF, NDAT…DPML, and DGVN…NMDL. Disordered stretches follow at residues 994–1030, 1172–1191, and 1230–1268; these read PIDA…TTIE, KSNR…KKGK, and NNTQ…VIDK. Over residues 1006–1030 the composition is skewed to polar residues; sequence QQTGPKTTSLTTPQPDESNGATTIE. The span at 1233-1245 shows a compositional bias: low complexity; sequence QVQQQQGQQQQGQ. Positions 1249 to 1260 are enriched in basic and acidic residues; it reads THSEGDGTERAK. ANK repeat units lie at residues 1273–1302, 1306–1335, 1340–1369, 1373–1402, 1408–1437, 1447–1476, 1480–1509, 1515–1546, 1548–1577, and 1581–1610; these read TLET…NIEH, KGFT…AIEA, TKDT…NKEH, SDYT…EINS, LGIS…DINA, YRNT…NVEH, TGLT…DPNA, TKDT…DIRN, KGCS…DTDM, and RKMS…QFPN. A coiled-coil region spans residues 1638–1696; sequence RNAKKAQAETAEETANRLLQLIDDEKERDINKKQKIKDKKKQKKEAKKKFQAEQEQLSA. Residues 1669–1857 are disordered; the sequence is KKQKIKDKKK…SSISERQHSW (189 aa). The segment covering 1670–1686 has biased composition (basic residues); the sequence is KQKIKDKKKQKKEAKKK. A compositionally biased stretch (pro residues) spans 1698–1708; the sequence is PSKPEPVVAPE. Residues 1709–1722 are compositionally biased toward acidic residues; the sequence is PEPEPETEPVEEPA. The segment covering 1811 to 1829 has biased composition (basic and acidic residues); that stretch reads DWQKAGKEGKKVRPKREGR. The span at 1832-1851 shows a compositional bias: polar residues; it reads APSSAGSSQAKHRSNTSSIS. The KH domain maps to 1864-1929; sequence VKAYEFTVPG…DVVSMAVNII (66 aa). Disordered regions lie at residues 1980-2182, 2196-2221, 2269-2292, 2301-2320, 2352-2417, 2444-2465, and 2539-2636; these read SASI…SLPS, FKPT…STAS, NSTA…SNDF, SNQK…NSQL, SQSS…TQQQ, MHRQ…NPYY, and GMMQ…SSRM. Polar residues predominate over residues 1994-2008; it reads SQCNRSSKSHGNQAT. Positions 2025–2045 are enriched in low complexity; it reads TPPTQTQTKQQPTPSPQVQQP. Residues 2057–2083 show a composition bias toward polar residues; it reads SLAQSSVPQATENVTKPTQTPPASVQQ. Composition is skewed to low complexity over residues 2099–2119 and 2139–2148; these read QVVQ…QRPQ and QQHMQQIQQQ. The segment covering 2167 to 2179 has biased composition (pro residues); that stretch reads PGPPVQPQTPPQS. Residues 2269 to 2280 show a composition bias toward low complexity; the sequence is NSTASSLNTATT. Residues 2281–2292 are compositionally biased toward polar residues; that stretch reads KNDTSDWGSNDF. Composition is skewed to low complexity over residues 2361 to 2373 and 2391 to 2417; these read QHQQ…MQDP and PQQF…TQQQ. Polar residues-rich tracts occupy residues 2449-2465, 2565-2574, and 2583-2595; these read NSSS…NPYY, RSASGSSQNR, and QQPQ…TQAD. Low complexity predominate over residues 2599–2615; it reads RLLLQQQQQQRSSQQQQ. Residues 2616-2636 show a composition bias toward polar residues; it reads NPTNQGLPQKWSNTWNSSSRM.

It belongs to the mask family.

It is found in the cytoplasm. The chain is Ankyrin repeat and KH domain-containing protein CBG24701 from Caenorhabditis briggsae.